A 684-amino-acid polypeptide reads, in one-letter code: Translation factor GUF1 homolog, mitochondrial (684 aa).

The 189-residue stretch at 82–270 (HLIRNFSIIA…AVIERIPQPK (189 aa)) folds into the tr-type G domain. Residues 91–98 (AHVDHGKS), 163–167 (DTPGH), and 217–220 (NKID) contribute to the GTP site.

It belongs to the TRAFAC class translation factor GTPase superfamily. Classic translation factor GTPase family. LepA subfamily.

It is found in the mitochondrion inner membrane. It catalyses the reaction GTP + H2O = GDP + phosphate + H(+). Its function is as follows. Promotes mitochondrial protein synthesis. May act as a fidelity factor of the translation reaction, by catalyzing a one-codon backward translocation of tRNAs on improperly translocated ribosomes. Binds to mitochondrial ribosomes in a GTP-dependent manner. This is Translation factor GUF1 homolog, mitochondrial from Physcomitrium patens (Spreading-leaved earth moss).